The sequence spans 230 residues: Ion-translocating oxidoreductase complex subunit E (230 aa).

Transmembrane regions (helical) follow at residues 39–59 (LGLG…VSLI), 69–89 (IPVF…LMNA), 93–113 (GLYL…IIIG), 125–145 (LPAA…LVVL), and 182–202 (SFLL…LIAL).

It belongs to the NqrDE/RnfAE family. In terms of assembly, the complex is composed of six subunits: RnfA, RnfB, RnfC, RnfD, RnfE and RnfG.

Its subcellular location is the cell inner membrane. Part of a membrane-bound complex that couples electron transfer with translocation of ions across the membrane. The protein is Ion-translocating oxidoreductase complex subunit E of Vibrio vulnificus (strain YJ016).